Consider the following 954-residue polypeptide: Glycine dehydrogenase (decarboxylating) (954 aa).

K700 carries the N6-(pyridoxal phosphate)lysine modification.

This sequence belongs to the GcvP family. As to quaternary structure, the glycine cleavage system is composed of four proteins: P, T, L and H. Pyridoxal 5'-phosphate serves as cofactor.

It carries out the reaction N(6)-[(R)-lipoyl]-L-lysyl-[glycine-cleavage complex H protein] + glycine + H(+) = N(6)-[(R)-S(8)-aminomethyldihydrolipoyl]-L-lysyl-[glycine-cleavage complex H protein] + CO2. Its function is as follows. The glycine cleavage system catalyzes the degradation of glycine. The P protein binds the alpha-amino group of glycine through its pyridoxal phosphate cofactor; CO(2) is released and the remaining methylamine moiety is then transferred to the lipoamide cofactor of the H protein. This is Glycine dehydrogenase (decarboxylating) from Dinoroseobacter shibae (strain DSM 16493 / NCIMB 14021 / DFL 12).